A 404-amino-acid polypeptide reads, in one-letter code: RNA exonuclease 3 (404 aa).

A compositionally biased stretch (polar residues) spans 1 to 17 (MNNNAQNKRSLDDSNGN). Residues 1–29 (MNNNAQNKRSLDDSNGNDTKRPKQEDPKY) are disordered. Basic and acidic residues predominate over residues 18 to 28 (DTKRPKQEDPK). Positions 241–389 (VLGIDCEMGF…EDSIAAIDIV (149 aa)) constitute an Exonuclease domain.

It belongs to the REXO1/REXO3 family.

It is found in the cytoplasm. The protein localises to the nucleus. 3' to 5' exoribonuclease required for proper 3' end maturation of MRP RNA and of the U5L snRNA. This chain is RNA exonuclease 3 (REX3), found in Candida albicans (strain SC5314 / ATCC MYA-2876) (Yeast).